The following is a 207-amino-acid chain: Dephospho-CoA kinase (207 aa).

Residues 4–204 form the DPCK domain; the sequence is VVGLTGGIGS…HLYLQFAEIF (201 aa). An ATP-binding site is contributed by 12–17; the sequence is GSGKST.

Belongs to the CoaE family.

The protein localises to the cytoplasm. The enzyme catalyses 3'-dephospho-CoA + ATP = ADP + CoA + H(+). The protein operates within cofactor biosynthesis; coenzyme A biosynthesis; CoA from (R)-pantothenate: step 5/5. In terms of biological role, catalyzes the phosphorylation of the 3'-hydroxyl group of dephosphocoenzyme A to form coenzyme A. The sequence is that of Dephospho-CoA kinase from Aggregatibacter actinomycetemcomitans (Actinobacillus actinomycetemcomitans).